Consider the following 376-residue polypeptide: cAMP-dependent protein kinase type I regulatory subunit (376 aa).

Residues 1 to 131 (MSYMMAKTLE…ALSKAIAKNV (131 aa)) form a dimerization and phosphorylation region. The disordered stretch occupies residues 72-93 (PDDCEDLSPMPQTAAPPVRRRG). A Pseudophosphorylation motif motif is present at residues 91–95 (RRGGI). Ser96 bears the Phosphoserine mark. Residues 132-247 (LFAH…FLSR), Glu197, Arg206, 250-371 (ILES…YNSF), Glu321, and Arg330 contribute to the 3',5'-cyclic AMP site.

Belongs to the cAMP-dependent kinase regulatory chain family. As to quaternary structure, tetramer, composed of 2 regulatory (R) and 2 catalytic (C) subunits. In the presence of cAMP it dissociates into 2 active monomeric C subunits and an R dimer. In terms of processing, the pseudophosphorylation site binds to the substrate-binding region of the catalytic chain but is not phosphorylated. The physiological significance of phosphorylations by other kinases is unclear.

The chain is cAMP-dependent protein kinase type I regulatory subunit (Pka-R1) from Drosophila melanogaster (Fruit fly).